Reading from the N-terminus, the 305-residue chain is MSGKLRLYKEKLEGYNRFYSIVKTIKMVTLAKYRAAQGRIRTRDFSLRYTELAFSKPQASRDAVAAAKNALVYIPITTNRGSCGALNSNIVRCIDSVVSSKMVLMPVGKRGIDSFSKLYPDEFRYGIINDMKESMHFGYATFVIENAYEVSKDADRYQVIFNRFVSAGVQRNAVYNIPSYEKWKEDLADAASSDNQKNRYLFANALQNEEEQLIRDFFDFHAALAVLNAVGENELSEQAARLVAVEGQLTNISSLQQRTSSLYNKTRQFGITAALIEILSAMSSLEGNAMKGVRRNKFWEGAVTK.

Belongs to the ATPase gamma chain family. In terms of assembly, F-type ATPases have 2 components, F(1) - the catalytic core - and F(o) - the membrane proton channel. F(1) has five subunits: alpha(3), beta(3), gamma(1), delta(1), epsilon(1), plus the additional subunit P18 (Tb427.05.1710) that is not present in F(1)F(o) ATP synthase from metazoa. Subunit P18 (Tb927.5.1710) interacts with the alpha subunit with a 1:1 stoichiometry; the interaction is direct. Subunit gamma is part of the central stalk. F(o) has three main subunits: a, b and c. The trypanosomal ATPase complex contains additional subunits that are not present in the F(1)F(o) ATP synthase from metazoa.

It localises to the mitochondrion. The protein resides in the mitochondrion inner membrane. In terms of biological role, mitochondrial membrane ATP synthase (F(1)F(o) ATP synthase) produces ATP from ADP in the presence of a proton gradient across the membrane which is generated by electron transport complexes of the respiratory chain. F-type ATPases consist of two structural domains, F(1) - containing the extramembraneous catalytic core, and F(o) - containing the membrane proton channel, linked together by a central stalk and a peripheral stalk. During catalysis, ATP synthesis in the catalytic domain of F(1) is coupled via a rotary mechanism of the central stalk subunits to proton translocation. Subunits alpha and beta form the catalytic core in F(1). Rotation of the central stalk against the surrounding alpha(3)beta(3) subunits leads to hydrolysis of ATP in three separate catalytic sites on the beta subunits. Contrary to the procyclic, insect form that requires F(1)F(o) ATP synthase for ATP synthesis, the bloodstream form relies on ATP hydrolysis by F(1)F(o) ATP synthase to maintain its mitochondrial membrane potential. This chain is ATP synthase subunit gamma, mitochondrial, found in Trypanosoma brucei brucei.